Reading from the N-terminus, the 85-residue chain is MLSQNGTADPRYISYPGCIDCGPTFHLETDTATTRNGTSSFGDRIRSFCERARSLISNFVTWRSRNESCEVLAEIPQEKEVESTL.

This is an uncharacterized protein from Gallid herpesvirus 2 (strain Chicken/Md5/ATCC VR-987) (GaHV-2).